The sequence spans 348 residues: Glycerol-1-phosphate dehydrogenase [NAD(P)+] (348 aa).

Residues 94 to 98 (GKPID) and 116 to 119 (TAAS) contribute to the NAD(+) site. D121 lines the substrate pocket. S125 lines the NAD(+) pocket. Substrate is bound at residue D168. Zn(2+) is bound by residues D168 and H248. Substrate is bound at residue H252. H264 is a binding site for Zn(2+).

It belongs to the glycerol-1-phosphate dehydrogenase family. It depends on Zn(2+) as a cofactor.

The protein localises to the cytoplasm. It carries out the reaction sn-glycerol 1-phosphate + NAD(+) = dihydroxyacetone phosphate + NADH + H(+). The catalysed reaction is sn-glycerol 1-phosphate + NADP(+) = dihydroxyacetone phosphate + NADPH + H(+). The protein operates within membrane lipid metabolism; glycerophospholipid metabolism. Its function is as follows. Catalyzes the NAD(P)H-dependent reduction of dihydroxyacetonephosphate (DHAP or glycerone phosphate) to glycerol 1-phosphate (G1P). The G1P thus generated is used as the glycerophosphate backbone of phospholipids in the cellular membranes of Archaea. The sequence is that of Glycerol-1-phosphate dehydrogenase [NAD(P)+] from Haloquadratum walsbyi (strain DSM 16790 / HBSQ001).